Reading from the N-terminus, the 447-residue chain is N-succinylarginine dihydrolase (447 aa).

Residues 19 to 28 (AGLSFGNEAS), asparagine 110, and 137 to 138 (HR) contribute to the substrate site. Glutamate 174 is a catalytic residue. Arginine 212 serves as a coordination point for substrate. The active site involves histidine 248. Aspartate 250 and asparagine 359 together coordinate substrate. Cysteine 365 acts as the Nucleophile in catalysis.

Belongs to the succinylarginine dihydrolase family. Homodimer.

It catalyses the reaction N(2)-succinyl-L-arginine + 2 H2O + 2 H(+) = N(2)-succinyl-L-ornithine + 2 NH4(+) + CO2. Its pathway is amino-acid degradation; L-arginine degradation via AST pathway; L-glutamate and succinate from L-arginine: step 2/5. Its function is as follows. Catalyzes the hydrolysis of N(2)-succinylarginine into N(2)-succinylornithine, ammonia and CO(2). The chain is N-succinylarginine dihydrolase from Salmonella schwarzengrund (strain CVM19633).